Consider the following 442-residue polypeptide: Glutamyl-tRNA(Gln) amidotransferase subunit A (442 aa).

Active-site charge relay system residues include lysine 50 and serine 125. Serine 149 acts as the Acyl-ester intermediate in catalysis.

The protein belongs to the amidase family. GatA subfamily. Heterotrimer of A, B and C subunits.

It carries out the reaction L-glutamyl-tRNA(Gln) + L-glutamine + ATP + H2O = L-glutaminyl-tRNA(Gln) + L-glutamate + ADP + phosphate + H(+). In terms of biological role, allows the formation of correctly charged Gln-tRNA(Gln) through the transamidation of misacylated Glu-tRNA(Gln) in organisms which lack glutaminyl-tRNA synthetase. The reaction takes place in the presence of glutamine and ATP through an activated gamma-phospho-Glu-tRNA(Gln). The polypeptide is Glutamyl-tRNA(Gln) amidotransferase subunit A (Nitratiruptor sp. (strain SB155-2)).